The primary structure comprises 1050 residues: DNA polymerase I A, chloroplastic/mitochondrial (1050 aa).

The transit peptide at 1 to 91 directs the protein to the chloroplast and mitochondrion; sequence MAMGVSLTSH…VVFNGEWELR (91 aa). The tract at residues 202–240 is disordered; sequence PRKGLDVGDNMDVNPKGEGIQRPLISDKSSGTANGNKNT. A compositionally biased stretch (polar residues) spans 228–240; the sequence is DKSSGTANGNKNT. Residues 312-490 enclose the 3'-5' exonuclease domain; sequence ELICFSIYCG…LYESMTKKLQ (179 aa). The disordered stretch occupies residues 673–694; it reads VVEDDDVETSETQKSKTDDETD. The polymerase stretch occupies residues 717-1048; that stretch reads AIASLCEVCS…DAKCAQNWYA (332 aa).

Belongs to the DNA polymerase type-A family. In terms of tissue distribution, expressed in shoot apical meristem.

The protein localises to the plastid. It localises to the chloroplast. It is found in the mitochondrion. The enzyme catalyses DNA(n) + a 2'-deoxyribonucleoside 5'-triphosphate = DNA(n+1) + diphosphate. Not inhibited by aphidicolin. In addition to polymerase activity, this DNA polymerase exhibits 5'-3' exonuclease activity. Required for DNA replication and accumulation in plastids and mitochondria. May be required for DNA repair in both organelles. This chain is DNA polymerase I A, chloroplastic/mitochondrial (POLIA), found in Arabidopsis thaliana (Mouse-ear cress).